The primary structure comprises 375 residues: Chaperone protein DnaJ (375 aa).

The J domain occupies 6-71 (DYYEVLGVPK…EKRRQYDQFG (66 aa)). Residues 138–220 (GTTKKIDVTL…CYGTGYISSK (83 aa)) form a CR-type zinc finger. Positions 151, 154, 168, 171, 194, 197, 208, and 211 each coordinate Zn(2+). CXXCXGXG motif repeat units lie at residues 151–158 (CSSCHGTG), 168–175 (CSKCGGRG), 194–201 (CPDCHGTG), and 208–215 (CPDCYGTG).

Belongs to the DnaJ family. As to quaternary structure, homodimer. Zn(2+) is required as a cofactor.

The protein resides in the cytoplasm. Its function is as follows. Participates actively in the response to hyperosmotic and heat shock by preventing the aggregation of stress-denatured proteins and by disaggregating proteins, also in an autonomous, DnaK-independent fashion. Unfolded proteins bind initially to DnaJ; upon interaction with the DnaJ-bound protein, DnaK hydrolyzes its bound ATP, resulting in the formation of a stable complex. GrpE releases ADP from DnaK; ATP binding to DnaK triggers the release of the substrate protein, thus completing the reaction cycle. Several rounds of ATP-dependent interactions between DnaJ, DnaK and GrpE are required for fully efficient folding. Also involved, together with DnaK and GrpE, in the DNA replication of plasmids through activation of initiation proteins. This is Chaperone protein DnaJ from Lachnospira eligens (strain ATCC 27750 / DSM 3376 / VPI C15-48 / C15-B4) (Eubacterium eligens).